Consider the following 379-residue polypeptide: Chaperone protein DnaJ (379 aa).

The region spanning 7–72 is the J domain; the sequence is CYYETLEVER…DKRAAYDRYG (66 aa). Residues 135–213 form a CR-type zinc finger; that stretch reads GKTAQIEIPV…CTGSGRVTKE (79 aa). Zn(2+)-binding residues include cysteine 148, cysteine 151, cysteine 165, cysteine 168, cysteine 187, cysteine 190, cysteine 201, and cysteine 204. 4 CXXCXGXG motif repeats span residues 148-155, 165-172, 187-194, and 201-208; these read CEACSGTG, CSTCGGAG, CPSCQGRG, and CPSCTGSG.

This sequence belongs to the DnaJ family. Homodimer. Zn(2+) is required as a cofactor.

It is found in the cytoplasm. In terms of biological role, participates actively in the response to hyperosmotic and heat shock by preventing the aggregation of stress-denatured proteins and by disaggregating proteins, also in an autonomous, DnaK-independent fashion. Unfolded proteins bind initially to DnaJ; upon interaction with the DnaJ-bound protein, DnaK hydrolyzes its bound ATP, resulting in the formation of a stable complex. GrpE releases ADP from DnaK; ATP binding to DnaK triggers the release of the substrate protein, thus completing the reaction cycle. Several rounds of ATP-dependent interactions between DnaJ, DnaK and GrpE are required for fully efficient folding. Also involved, together with DnaK and GrpE, in the DNA replication of plasmids through activation of initiation proteins. This Rhodopseudomonas palustris (strain ATCC BAA-98 / CGA009) protein is Chaperone protein DnaJ.